Here is a 203-residue protein sequence, read N- to C-terminus: MKKNLLITSVLAMATVSGSVLAAVTNGQLTFNWQGVVPSAPVTQSSWAFVNGLDIPFTPGTEQLNITLDSNKDITARSVKPYDFFIVPVSGNVTPGAPVTRDTSANINSVNAFLSSVPVSNGFVGNKQLTLSTAVEAAKGEVAITLNGQALKVGSASPTVVTVASNKKESHISIDMNAKAAAADVAEGAAINFVAPVTFAVDI.

The first 22 residues, 1 to 22 (MKKNLLITSVLAMATVSGSVLA), serve as a signal peptide directing secretion.

The protein resides in the fimbrium. Functionally, major subunit of fimbriae. Fimbriae (also called pili), are polar filaments radiating from the surface of the bacterium to a length of 0.5-1.5 micrometers and numbering 100-300 per cell. They enable bacteria to colonize the epithelium of specific host organs. The polypeptide is CS5 fimbrial subunit (Escherichia coli).